A 168-amino-acid polypeptide reads, in one-letter code: Crossover junction endodeoxyribonuclease RuvC (168 aa).

Active-site residues include Asp7, Glu64, and Asp136. 3 residues coordinate Mg(2+): Asp7, Glu64, and Asp136.

This sequence belongs to the RuvC family. As to quaternary structure, homodimer which binds Holliday junction (HJ) DNA. The HJ becomes 2-fold symmetrical on binding to RuvC with unstacked arms; it has a different conformation from HJ DNA in complex with RuvA. In the full resolvosome a probable DNA-RuvA(4)-RuvB(12)-RuvC(2) complex forms which resolves the HJ. Mg(2+) serves as cofactor.

It is found in the cytoplasm. The enzyme catalyses Endonucleolytic cleavage at a junction such as a reciprocal single-stranded crossover between two homologous DNA duplexes (Holliday junction).. Its function is as follows. The RuvA-RuvB-RuvC complex processes Holliday junction (HJ) DNA during genetic recombination and DNA repair. Endonuclease that resolves HJ intermediates. Cleaves cruciform DNA by making single-stranded nicks across the HJ at symmetrical positions within the homologous arms, yielding a 5'-phosphate and a 3'-hydroxyl group; requires a central core of homology in the junction. The consensus cleavage sequence is 5'-(A/T)TT(C/G)-3'. Cleavage occurs on the 3'-side of the TT dinucleotide at the point of strand exchange. HJ branch migration catalyzed by RuvA-RuvB allows RuvC to scan DNA until it finds its consensus sequence, where it cleaves and resolves the cruciform DNA. The chain is Crossover junction endodeoxyribonuclease RuvC from Polynucleobacter necessarius subsp. necessarius (strain STIR1).